Reading from the N-terminus, the 141-residue chain is Protein stum homolog (141 aa).

Position 26 is a phosphoserine (Ser26). The next 2 helical transmembrane spans lie at 51-71 (FPVA…GTFV) and 87-107 (RHVC…VLTA).

It belongs to the SPEC3 family. Stum subfamily.

Its subcellular location is the membrane. This is Protein stum homolog from Mus musculus (Mouse).